Consider the following 126-residue polypeptide: Glycine cleavage system H protein (126 aa).

One can recognise a Lipoyl-binding domain in the interval 23 to 104 (TLTVGITDHA…PYDNWLFKIK (82 aa)). Lys64 is modified (N6-lipoyllysine).

It belongs to the GcvH family. The glycine cleavage system is composed of four proteins: P, T, L and H. (R)-lipoate serves as cofactor.

Its function is as follows. The glycine cleavage system catalyzes the degradation of glycine. The H protein shuttles the methylamine group of glycine from the P protein to the T protein. In Paraburkholderia phymatum (strain DSM 17167 / CIP 108236 / LMG 21445 / STM815) (Burkholderia phymatum), this protein is Glycine cleavage system H protein.